Reading from the N-terminus, the 277-residue chain is Large ribosomal subunit protein uL2 (277 aa).

The segment at 212-277 is disordered; it reads RWRGKRPHVR…KFIVRGRKSK (66 aa). Positions 254-277 are enriched in basic residues; that stretch reads TAGKKTRDKKKASTKFIVRGRKSK.

It belongs to the universal ribosomal protein uL2 family. In terms of assembly, part of the 50S ribosomal subunit. Forms a bridge to the 30S subunit in the 70S ribosome.

In terms of biological role, one of the primary rRNA binding proteins. Required for association of the 30S and 50S subunits to form the 70S ribosome, for tRNA binding and peptide bond formation. It has been suggested to have peptidyltransferase activity; this is somewhat controversial. Makes several contacts with the 16S rRNA in the 70S ribosome. The chain is Large ribosomal subunit protein uL2 from Leuconostoc citreum (strain KM20).